A 152-amino-acid chain; its full sequence is Regulatory protein RecX (152 aa).

It belongs to the RecX family.

The protein resides in the cytoplasm. Its function is as follows. Modulates RecA activity. The polypeptide is Regulatory protein RecX (Haemophilus influenzae (strain 86-028NP)).